A 261-amino-acid chain; its full sequence is UPF0328 protein ECU02_0020/ECU04_1700 (261 aa).

Residues 1–20 (MSITSIPQPHETNEQHHTEI) form a disordered region. Residues 11–20 (ETNEQHHTEI) are compositionally biased toward basic and acidic residues.

The protein belongs to the UPF0328 family.

The chain is UPF0328 protein ECU02_0020/ECU04_1700 from Encephalitozoon cuniculi (strain GB-M1) (Microsporidian parasite).